A 554-amino-acid polypeptide reads, in one-letter code: Phenylalanine--tRNA ligase beta subunit (554 aa).

The 76-residue stretch at 276-351 folds into the B5 domain; that stretch reads LTPRYREISI…KNHGYEKFEG (76 aa). Positions 329, 335, 338, and 339 each coordinate Mg(2+).

This sequence belongs to the phenylalanyl-tRNA synthetase beta subunit family. Type 2 subfamily. As to quaternary structure, tetramer of two alpha and two beta subunits. Mg(2+) is required as a cofactor.

The protein resides in the cytoplasm. It carries out the reaction tRNA(Phe) + L-phenylalanine + ATP = L-phenylalanyl-tRNA(Phe) + AMP + diphosphate + H(+). The protein is Phenylalanine--tRNA ligase beta subunit of Methanococcus vannielii (strain ATCC 35089 / DSM 1224 / JCM 13029 / OCM 148 / SB).